The sequence spans 426 residues: Glutamate/glutamine/aspartate/asparagine transport system permease protein BztB (426 aa).

8 consecutive transmembrane segments (helical) span residues serine 25 to asparagine 45, leucine 96 to leucine 116, valine 132 to alanine 152, leucine 211 to tryptophan 231, tryptophan 252 to phenylalanine 272, serine 293 to valine 313, serine 340 to leucine 360, and methionine 396 to leucine 416. Residues leucine 92–methionine 414 form the ABC transmembrane type-1 domain.

It belongs to the binding-protein-dependent transport system permease family. HisMQ subfamily. As to quaternary structure, bztB and BztC form a heterodimer which can form a membrane complex with a homodimer of BztD.

The protein resides in the cell inner membrane. In terms of biological role, part of a binding-protein-dependent transport system for glutamate, glutamine, aspartate and asparagine. Probably responsible for the translocation of the substrate across the membrane. This is Glutamate/glutamine/aspartate/asparagine transport system permease protein BztB (bztB) from Rhodobacter capsulatus (strain ATCC BAA-309 / NBRC 16581 / SB1003).